The sequence spans 302 residues: Enolase-phosphatase E1 (302 aa).

Residues 1-10 (MSDSRLRRRQ) show a composition bias toward basic residues. The tract at residues 1-25 (MSDSRLRRRQGTAGTDNKRRADGPH) is disordered. The segment covering 16-25 (DNKRRADGPH) has biased composition (basic and acidic residues). 2 residues coordinate Mg(2+): aspartate 40 and glutamate 42. Substrate is bound by residues 183–184 (SS) and lysine 217. Aspartate 242 contributes to the Mg(2+) binding site.

It belongs to the HAD-like hydrolase superfamily. MasA/MtnC family. As to quaternary structure, monomer. Mg(2+) serves as cofactor.

The protein resides in the cytoplasm. It is found in the nucleus. It catalyses the reaction 5-methylsulfanyl-2,3-dioxopentyl phosphate + H2O = 1,2-dihydroxy-5-(methylsulfanyl)pent-1-en-3-one + phosphate. Its pathway is amino-acid biosynthesis; L-methionine biosynthesis via salvage pathway; L-methionine from S-methyl-5-thio-alpha-D-ribose 1-phosphate: step 3/6. It participates in amino-acid biosynthesis; L-methionine biosynthesis via salvage pathway; L-methionine from S-methyl-5-thio-alpha-D-ribose 1-phosphate: step 4/6. Its function is as follows. Bifunctional enzyme that catalyzes the enolization of 2,3-diketo-5-methylthiopentyl-1-phosphate (DK-MTP-1-P) into the intermediate 2-hydroxy-3-keto-5-methylthiopentenyl-1-phosphate (HK-MTPenyl-1-P), which is then dephosphorylated to form the acireductone 1,2-dihydroxy-3-keto-5-methylthiopentene (DHK-MTPene). The protein is Enolase-phosphatase E1 of Branchiostoma floridae (Florida lancelet).